Reading from the N-terminus, the 603-residue chain is Threonine--tRNA ligase (603 aa).

The interval 209 to 500 is catalytic; the sequence is DHRKLGNEMK…LIEHCAGELP (292 aa). Zn(2+) is bound by residues cysteine 301, histidine 352, and histidine 477.

It belongs to the class-II aminoacyl-tRNA synthetase family. Homodimer. It depends on Zn(2+) as a cofactor.

It localises to the cytoplasm. The enzyme catalyses tRNA(Thr) + L-threonine + ATP = L-threonyl-tRNA(Thr) + AMP + diphosphate + H(+). Functionally, catalyzes the attachment of threonine to tRNA(Thr) in a two-step reaction: L-threonine is first activated by ATP to form Thr-AMP and then transferred to the acceptor end of tRNA(Thr). Also edits incorrectly charged L-seryl-tRNA(Thr). The chain is Threonine--tRNA ligase from Campylobacter lari (strain RM2100 / D67 / ATCC BAA-1060).